The following is a 308-amino-acid chain: tRNA dimethylallyltransferase (308 aa).

Position 19–26 (19–26 (GPTASGKS)) interacts with ATP. 21–26 (TASGKS) provides a ligand contact to substrate. The tract at residues 44–47 (DSMQ) is interaction with substrate tRNA.

It belongs to the IPP transferase family. Monomer. Requires Mg(2+) as cofactor.

It carries out the reaction adenosine(37) in tRNA + dimethylallyl diphosphate = N(6)-dimethylallyladenosine(37) in tRNA + diphosphate. Catalyzes the transfer of a dimethylallyl group onto the adenine at position 37 in tRNAs that read codons beginning with uridine, leading to the formation of N6-(dimethylallyl)adenosine (i(6)A). The sequence is that of tRNA dimethylallyltransferase from Methylobacterium radiotolerans (strain ATCC 27329 / DSM 1819 / JCM 2831 / NBRC 15690 / NCIMB 10815 / 0-1).